The following is a 497-amino-acid chain: Glutamyl-tRNA reductase (497 aa).

Residues 58–61 (TCNR), serine 118, 123–125 (EQQ), and glutamine 129 contribute to the substrate site. The active-site Nucleophile is the cysteine 59. 214–219 (GAGAMA) contacts NADP(+). The span at 461–477 (VTQPGQADSSAAQTAGT) shows a compositional bias: polar residues. The segment at 461–486 (VTQPGQADSSAAQTAGTSARADQIPS) is disordered.

This sequence belongs to the glutamyl-tRNA reductase family. In terms of assembly, homodimer.

It catalyses the reaction (S)-4-amino-5-oxopentanoate + tRNA(Glu) + NADP(+) = L-glutamyl-tRNA(Glu) + NADPH + H(+). Its pathway is porphyrin-containing compound metabolism; protoporphyrin-IX biosynthesis; 5-aminolevulinate from L-glutamyl-tRNA(Glu): step 1/2. Catalyzes the NADPH-dependent reduction of glutamyl-tRNA(Glu) to glutamate 1-semialdehyde (GSA). This chain is Glutamyl-tRNA reductase, found in Corynebacterium jeikeium (strain K411).